The sequence spans 107 residues: Protein Rev (107 aa).

A Phosphoserine; by host CK2 modification is found at S5. The tract at residues 18 to 26 (AIKILYQSN) is homomultimerization. 2 disordered regions span residues 24–48 (QSNP…WRAR) and 82–107 (HLDC…VGRS). The Nuclear localization signal and RNA-binding (RRE) signature appears at 34–50 (TRQARRNRRRRWRARQR). Residues 36–48 (QARRNRRRRWRAR) show a composition bias toward basic residues. A Nuclear export signal and binding to XPO1 motif is present at residues 73-84 (LQLPPLERLHLD). Residues 88–101 (DSGTSGTQQPQGTE) show a composition bias toward polar residues. Position 92 is a phosphoserine; by host (S92).

This sequence belongs to the HIV-1 REV protein family. Homomultimer; when bound to the RRE. Multimeric assembly is essential for activity and may involve XPO1. Binds to human KPNB1, XPO1, TNPO1, RANBP5 and IPO7. Interacts with the viral Integrase. Interacts with human KHDRBS1. Interacts with human NAP1; this interaction decreases Rev multimerization and stimulates its activity. Interacts with human DEAD-box helicases DDX3 and DDX24; these interactions may serve for viral RNA export to the cytoplasm and packaging, respectively. Interacts with human PSIP1; this interaction may inhibit HIV-1 DNA integration by promoting dissociation of the Integrase-LEDGF/p75 complex. Asymmetrically arginine dimethylated at one site by host PRMT6. Methylation impairs the RNA-binding activity and export of viral RNA from the nucleus to the cytoplasm. In terms of processing, phosphorylated by protein kinase CK2. Presence of, and maybe binding to the N-terminus of the regulatory beta subunit of CK2 is necessary for CK2-mediated Rev's phosphorylation.

It is found in the host nucleus. The protein resides in the host nucleolus. It localises to the host cytoplasm. Functionally, escorts unspliced or incompletely spliced viral pre-mRNAs (late transcripts) out of the nucleus of infected cells. These pre-mRNAs carry a recognition sequence called Rev responsive element (RRE) located in the env gene, that is not present in fully spliced viral mRNAs (early transcripts). This function is essential since most viral proteins are translated from unspliced or partially spliced pre-mRNAs which cannot exit the nucleus by the pathway used by fully processed cellular mRNAs. Rev itself is translated from a fully spliced mRNA that readily exits the nucleus. Rev's nuclear localization signal (NLS) binds directly to KPNB1/Importin beta-1 without previous binding to KPNA1/Importin alpha-1. KPNB1 binds to the GDP bound form of RAN (Ran-GDP) and targets Rev to the nucleus. In the nucleus, the conversion from Ran-GDP to Ran-GTP dissociates Rev from KPNB1 and allows Rev's binding to the RRE in viral pre-mRNAs. Rev multimerization on the RRE via cooperative assembly exposes its nuclear export signal (NES) to the surface. Rev can then form a complex with XPO1/CRM1 and Ran-GTP, leading to nuclear export of the complex. Conversion from Ran-GTP to Ran-GDP mediates dissociation of the Rev/RRE/XPO1/RAN complex, so that Rev can return to the nucleus for a subsequent round of export. Beside KPNB1, also seems to interact with TNPO1/Transportin-1, RANBP5/IPO5 and IPO7/RANBP7 for nuclear import. The nucleoporin-like HRB/RIP is an essential cofactor that probably indirectly interacts with Rev to release HIV RNAs from the perinuclear region to the cytoplasm. This chain is Protein Rev, found in Human immunodeficiency virus type 1 group M subtype G (isolate SE6165) (HIV-1).